A 225-amino-acid chain; its full sequence is Imidazoleglycerol-phosphate dehydratase (225 aa).

It belongs to the imidazoleglycerol-phosphate dehydratase family.

It carries out the reaction D-erythro-1-(imidazol-4-yl)glycerol 3-phosphate = 3-(imidazol-4-yl)-2-oxopropyl phosphate + H2O. The protein operates within amino-acid biosynthesis; L-histidine biosynthesis; L-histidine from 5-phospho-alpha-D-ribose 1-diphosphate: step 6/9. This is Imidazoleglycerol-phosphate dehydratase (PTH3) from Pyricularia oryzae (strain 70-15 / ATCC MYA-4617 / FGSC 8958) (Rice blast fungus).